We begin with the raw amino-acid sequence, 924 residues long: Isoleucine--tRNA ligase (924 aa).

A 'HIGH' region motif is present at residues 57–67; sequence PYANGDIHMGH. Glu-552 lines the L-isoleucyl-5'-AMP pocket. The short motif at 593 to 597 is the 'KMSKS' region element; the sequence is KMSKS. ATP is bound at residue Lys-596. Zn(2+) is bound by residues Cys-891, Cys-894, Cys-911, and Cys-914.

Belongs to the class-I aminoacyl-tRNA synthetase family. IleS type 1 subfamily. Monomer. The cofactor is Zn(2+).

The protein localises to the cytoplasm. The enzyme catalyses tRNA(Ile) + L-isoleucine + ATP = L-isoleucyl-tRNA(Ile) + AMP + diphosphate. In terms of biological role, catalyzes the attachment of isoleucine to tRNA(Ile). As IleRS can inadvertently accommodate and process structurally similar amino acids such as valine, to avoid such errors it has two additional distinct tRNA(Ile)-dependent editing activities. One activity is designated as 'pretransfer' editing and involves the hydrolysis of activated Val-AMP. The other activity is designated 'posttransfer' editing and involves deacylation of mischarged Val-tRNA(Ile). This is Isoleucine--tRNA ligase from Geobacillus kaustophilus (strain HTA426).